Reading from the N-terminus, the 86-residue chain is DNA-directed RNA polymerase subunit Rpo11 (86 aa).

This sequence belongs to the archaeal Rpo11/eukaryotic RPB11/RPC19 RNA polymerase subunit family. As to quaternary structure, part of the RNA polymerase complex.

The protein resides in the cytoplasm. It catalyses the reaction RNA(n) + a ribonucleoside 5'-triphosphate = RNA(n+1) + diphosphate. Its function is as follows. DNA-dependent RNA polymerase (RNAP) catalyzes the transcription of DNA into RNA using the four ribonucleoside triphosphates as substrates. This chain is DNA-directed RNA polymerase subunit Rpo11, found in Archaeoglobus fulgidus (strain ATCC 49558 / DSM 4304 / JCM 9628 / NBRC 100126 / VC-16).